The primary structure comprises 1130 residues: Roquin-1 (1130 aa).

Residues C14, C17, C33, H35, C38, C50, and D53 each coordinate Zn(2+). An RING-type; degenerate zinc finger spans residues 14–54; it reads CPICTQTFDETIRKPISLGCGHTVCKMCLNKLHRKACPFDQ. The interval 128-176 is HEPN-N; that stretch reads VLSRPMQRKLVTLVHCQLVEEEGRIRAMRAARSLGERTVTELILQHQNP. The interval 177 to 326 is ROQ; sequence QQLSSNLWAA…MQSIIDKLQT (150 aa). Residues 327–399 are HEPN-C; it reads PASFAQSVQE…GLVDYIQNHS (73 aa). The segment at 413–441 adopts a C3H1-type zinc-finger fold; that stretch reads KYKTYMCRDMKQRGGCPRGASCTFAHSQE. Position 462 is a phosphoserine (S462). Disordered stretches follow at residues 493–567 and 722–750; these read LPNG…DLPP and PHPA…PSLD. The segment covering 497–506 has biased composition (polar residues); that stretch reads IASSGSTVTQ. 2 positions are modified to phosphoserine: S531 and S535. Composition is skewed to pro residues over residues 553 to 567 and 732 to 746; these read NPHP…DLPP and PRDP…PQPH. Phosphoserine is present on residues S861, S1107, and S1110. A disordered region spans residues 1100–1130; that stretch reads KTSSLNLSEDSEGGGDNNDSQRSGVVSNSAP. Polar residues predominate over residues 1116–1130; that stretch reads NNDSQRSGVVSNSAP.

Interacts with DDX6 and EDC4. Interacts with CCR4-NOT deadenylase complex. Interacts with RC3H1; the interaction is RNA independent. Post-translationally, proteolytically cleaved after Arg-510 and Arg-579 by MALT1 in activated CD4(+) T cells; cleavage at Arg-510 and Arg-579 is critical for promoting RC3H1 degradation in response to T-cell receptor (TCR) stimulation, and hence is necessary for prolonging the stability of a set of mRNAs controlling Th17 cell differentiation. In terms of tissue distribution, widely expressed, with highest levels in lymph node and thymus and slightly lesser amounts in brain, lung, and spleen (at protein level). Very weak expression in heart, muscle, and kidney (at protein level). Expressed in CD4(+) helper T-cells (at protein level).

It is found in the cytoplasm. It localises to the P-body. The protein resides in the cytoplasmic granule. The enzyme catalyses S-ubiquitinyl-[E2 ubiquitin-conjugating enzyme]-L-cysteine + [acceptor protein]-L-lysine = [E2 ubiquitin-conjugating enzyme]-L-cysteine + N(6)-ubiquitinyl-[acceptor protein]-L-lysine.. The protein operates within protein modification; protein ubiquitination. Functionally, post-transcriptional repressor of mRNAs containing a conserved stem loop motif, called constitutive decay element (CDE), which is often located in the 3'-UTR, as in HMGXB3, ICOS, IER3, NFKBID, NFKBIZ, PPP1R10, TNF, TNFRSF4 and in many more mRNAs. Cleaves translationally inactive mRNAs harboring a stem-loop (SL), often located in their 3'-UTRs, during the early phase of inflammation in a helicase UPF1-independent manner. Binds to CDE and promotes mRNA deadenylation and degradation. This process does not involve miRNAs. In follicular helper T (Tfh) cells, represses of ICOS and TNFRSF4/Ox40 expression, thus preventing spontaneous Tfh cell differentiation, germinal center B-cell differentiation in the absence of immunization and autoimmunity. In resting or LPS-stimulated macrophages, controls inflammation by suppressing TNF expression. Also recognizes CDE in its own mRNA and in that of paralogous RC3H2, possibly leading to feedback loop regulation. Inhibits cooperatively with ZC3H12A the differentiation of helper T cells Th17 in lungs. They repress target mRNA encoding the Th17 cell-promoting factors IL6, ICOS, REL, IRF4, NFKBID and NFKBIZ. The cooperation requires RNA-binding by RC3H1 and the nuclease activity of ZC3H12A. Recognizes and binds mRNAs containing a hexaloop stem-loop motif, called alternative decay element (ADE). Together with ZC3H12A, destabilizes TNFRSF4/OX40 mRNA by binding to the conserved stem loop structure in its 3'UTR. Able to interact with double-stranded RNA. miRNA-binding protein that regulates microRNA homeostasis. Enhances DICER-mediated processing of pre-MIR146a but reduces mature MIR146a levels through an increase of 3' end uridylation. Both inhibits ICOS mRNA expression and they may act together to exert the suppression. Acts as a ubiquitin E3 ligase. Pairs with E2 enzymes UBE2A, UBE2B, UBE2D2, UBE2F, UBE2G1, UBE2G2 and UBE2L3 and produces polyubiquitin chains. Shows the strongest activity when paired with UBE2N:UBE2V1 or UBE2N:UBE2V2 E2 complexes and generate both short and long polyubiquitin chains. The sequence is that of Roquin-1 from Mus musculus (Mouse).